A 711-amino-acid chain; its full sequence is Ribosomal RNA large subunit methyltransferase K/L (711 aa).

Positions 43–154 (TLYRTLLWSR…RENLVISLDL (112 aa)) constitute a THUMP domain.

This sequence belongs to the methyltransferase superfamily. RlmKL family.

The protein resides in the cytoplasm. The enzyme catalyses guanosine(2445) in 23S rRNA + S-adenosyl-L-methionine = N(2)-methylguanosine(2445) in 23S rRNA + S-adenosyl-L-homocysteine + H(+). It carries out the reaction guanosine(2069) in 23S rRNA + S-adenosyl-L-methionine = N(2)-methylguanosine(2069) in 23S rRNA + S-adenosyl-L-homocysteine + H(+). In terms of biological role, specifically methylates the guanine in position 2445 (m2G2445) and the guanine in position 2069 (m7G2069) of 23S rRNA. In Haemophilus influenzae (strain PittEE), this protein is Ribosomal RNA large subunit methyltransferase K/L.